The chain runs to 408 residues: Peptidase T (408 aa).

His78 lines the Zn(2+) pocket. Residue Asp80 is part of the active site. Asp141 contacts Zn(2+). The Proton acceptor role is filled by Glu175. Positions 176, 198, and 380 each coordinate Zn(2+).

The protein belongs to the peptidase M20B family. The cofactor is Zn(2+).

It localises to the cytoplasm. It catalyses the reaction Release of the N-terminal residue from a tripeptide.. Functionally, cleaves the N-terminal amino acid of tripeptides. The protein is Peptidase T of Clostridium botulinum (strain Langeland / NCTC 10281 / Type F).